Consider the following 254-residue polypeptide: Phosphoribosylaminoimidazole-succinocarboxamide synthase (254 aa).

This sequence belongs to the SAICAR synthetase family.

The catalysed reaction is 5-amino-1-(5-phospho-D-ribosyl)imidazole-4-carboxylate + L-aspartate + ATP = (2S)-2-[5-amino-1-(5-phospho-beta-D-ribosyl)imidazole-4-carboxamido]succinate + ADP + phosphate + 2 H(+). It participates in purine metabolism; IMP biosynthesis via de novo pathway; 5-amino-1-(5-phospho-D-ribosyl)imidazole-4-carboxamide from 5-amino-1-(5-phospho-D-ribosyl)imidazole-4-carboxylate: step 1/2. The polypeptide is Phosphoribosylaminoimidazole-succinocarboxamide synthase (Brucella canis (strain ATCC 23365 / NCTC 10854 / RM-666)).